The chain runs to 91 residues: Preprofallaxidin-2 (91 aa).

An N-terminal signal peptide occupies residues 1–22 (MASLKKSLFLVLFLGLVSLSIC). A propeptide spanning residues 23–49 (EKEKRENEGNENEEEEENHEEGSEEKR) is cleaved from the precursor. A disordered region spans residues 24–49 (KEKRENEGNENEEEEENHEEGSEEKR). The span at 31 to 41 (GNENEEEEENH) shows a compositional bias: acidic residues. A Leucine amide modification is found at leucine 65. A propeptide spanning residues 69–73 (SEEKR) is cleaved from the precursor. Position 89 is a leucine amide (leucine 89).

The protein belongs to the frog skin active peptide (FSAP) family. Dermaseptin subfamily. In terms of tissue distribution, expressed by the skin glands.

It localises to the secreted. Functionally, fallaxidin-3.1 shows antibacterial activity against the Gram-positive bacteria E.faecalis (MIC=100 uM) and L.lactis (MIC=100 uM). No antibacterial activity against the Gram-positive bacteria B.cereus, L.innocua, M.luteus, S.epidermidis, S.uberis and S.aureus, or the Gram-negative bacteria E.cloacae and E.coli. In terms of biological role, fallaxidin-3.2 shows antibacterial activity against the Gram-positive bacteria E.faecalis (MIC=100 uM) and L.lactis (MIC=500 uM). No antibacterial activity against the Gram-positive bacteria B.cereus, L.innocua, M.luteus, S.epidermidis, S.uberis and S.aureus, or the Gram-negative bacteria E.cloacae and E.coli. The chain is Preprofallaxidin-2 from Litoria fallax (Eastern dwarf tree frog).